Consider the following 158-residue polypeptide: Acireductone dioxygenase (158 aa).

Fe(2+) is bound by residues His-81, His-83, Glu-87, and His-126. Residues His-81, His-83, Glu-87, and His-126 each contribute to the Ni(2+) site.

The protein belongs to the acireductone dioxygenase (ARD) family. Requires Fe(2+) as cofactor. It depends on Ni(2+) as a cofactor.

The protein resides in the cytoplasm. The protein localises to the nucleus. It carries out the reaction 1,2-dihydroxy-5-(methylsulfanyl)pent-1-en-3-one + O2 = 4-methylsulfanyl-2-oxobutanoate + formate + 2 H(+). It catalyses the reaction 1,2-dihydroxy-5-(methylsulfanyl)pent-1-en-3-one + O2 = 3-(methylsulfanyl)propanoate + CO + formate + 2 H(+). It participates in amino-acid biosynthesis; L-methionine biosynthesis via salvage pathway; L-methionine from S-methyl-5-thio-alpha-D-ribose 1-phosphate: step 5/6. Its function is as follows. Catalyzes 2 different reactions between oxygen and the acireductone 1,2-dihydroxy-3-keto-5-methylthiopentene (DHK-MTPene) depending upon the metal bound in the active site. Fe-containing acireductone dioxygenase (Fe-ARD) produces formate and 2-keto-4-methylthiobutyrate (KMTB), the alpha-ketoacid precursor of methionine in the methionine recycle pathway. Ni-containing acireductone dioxygenase (Ni-ARD) produces methylthiopropionate, carbon monoxide and formate, and does not lie on the methionine recycle pathway. The protein is Acireductone dioxygenase of Metarhizium robertsii (strain ARSEF 23 / ATCC MYA-3075) (Metarhizium anisopliae (strain ARSEF 23)).